Here is a 194-residue protein sequence, read N- to C-terminus: Large ribosomal subunit protein bL9 (194 aa).

A compositionally biased stretch (low complexity) spans 166–184 (AENQAQADEQAGELAAAAA). Residues 166–194 (AENQAQADEQAGELAAAAAERGDMGGDEE) form a disordered region. Residues 185-194 (ERGDMGGDEE) show a composition bias toward basic and acidic residues.

It belongs to the bacterial ribosomal protein bL9 family.

Binds to the 23S rRNA. The polypeptide is Large ribosomal subunit protein bL9 (Hyphomonas neptunium (strain ATCC 15444)).